A 320-amino-acid polypeptide reads, in one-letter code: Membrane protein insertase YidC 2 (320 aa).

The N-terminal stretch at 1–23 (MKNLKKKLTLTGLMTAGLLFLSG) is a signal peptide. The N-palmitoyl cysteine moiety is linked to residue Cys24. Cys24 is lipidated: S-diacylglycerol cysteine. Transmembrane regions (helical) follow at residues 68 to 88 (YGWGIIFVTLIIRFLILPLGL), 142 to 162 (MLSSIGCLPMLIQWPFFIALY), 178 to 198 (GIPLGHPSVVLVIISGVLYFI), 217 to 237 (AMLIMSPAMIVVFSFMSPAGV), and 239 to 259 (LYWAVGGFVIVIQQIIITFIM). The segment at 270 to 320 (EFTKNPPKINNEGLKDVTPTSVQENFKEITSERNEKERKSGGRNAGKQNRK) is disordered. The span at 294 to 309 (NFKEITSERNEKERKS) shows a compositional bias: basic and acidic residues.

This sequence belongs to the OXA1/ALB3/YidC family. Type 2 subfamily.

The protein resides in the cell membrane. Its function is as follows. Required for the insertion and/or proper folding and/or complex formation of integral membrane proteins into the membrane. Involved in integration of membrane proteins that insert both dependently and independently of the Sec translocase complex, as well as at least some lipoproteins. The protein is Membrane protein insertase YidC 2 of Lactococcus lactis subsp. lactis (strain IL1403) (Streptococcus lactis).